The following is a 185-amino-acid chain: Peptidyl-tRNA hydrolase (185 aa).

Y14 lines the tRNA pocket. H19 functions as the Proton acceptor in the catalytic mechanism. Y65, N67, and N113 together coordinate tRNA.

It belongs to the PTH family. Monomer.

The protein localises to the cytoplasm. It catalyses the reaction an N-acyl-L-alpha-aminoacyl-tRNA + H2O = an N-acyl-L-amino acid + a tRNA + H(+). Functionally, hydrolyzes ribosome-free peptidyl-tRNAs (with 1 or more amino acids incorporated), which drop off the ribosome during protein synthesis, or as a result of ribosome stalling. Catalyzes the release of premature peptidyl moieties from peptidyl-tRNA molecules trapped in stalled 50S ribosomal subunits, and thus maintains levels of free tRNAs and 50S ribosomes. This chain is Peptidyl-tRNA hydrolase, found in Rickettsia felis (strain ATCC VR-1525 / URRWXCal2) (Rickettsia azadi).